A 358-amino-acid polypeptide reads, in one-letter code: Nuclear receptor subfamily 1 group I member 3 (358 aa).

Positions P18–S93 form a DNA-binding region, nuclear receptor. The NR C4-type zinc finger occupies C21–C41. A Phosphothreonine; by PKC modification is found at T48. The NR C4-type zinc finger occupies C57 to C81. The region spanning Q119–S358 is the NR LBD domain.

It belongs to the nuclear hormone receptor family. NR1 subfamily. Heterodimer of NR1I3 and RXR. Interacts with PSMC4. Interacts with ECT2. Directly interacts with DNAJC7; this complex may also include HSP90. Interacts with CRY1. Interacts with CRY2 in a ligand-dependent manner. In terms of processing, phosphorylated at Thr-48 by PKC, dephosphorylation of Thr-48 is required for nuclear translocation and activation. Predominantly expressed in liver.

Its subcellular location is the nucleus. It is found in the cytoplasm. The protein localises to the cytoskeleton. Binds and transactivates the retinoic acid response elements that control expression of the retinoic acid receptor beta 2 and alcohol dehydrogenase 3 genes. Transactivates both the phenobarbital responsive element module of the human CYP2B6 gene and the CYP3A4 xenobiotic response element. The polypeptide is Nuclear receptor subfamily 1 group I member 3 (Nr1i3) (Mus musculus (Mouse)).